The chain runs to 89 residues: Myrmicitoxin(1)-Pr2c (89 aa).

An N-terminal signal peptide occupies residues 1–23 (MEIPKLLYIAVIAIGLSGSLTCA). The propeptide occupies 24–61 (TPLANPWADPEAEANPKAKATAEATAEAIAEALAEPEP). Asparagine 88 is modified (asparagine amide).

Belongs to the formicidae venom clade 1 family. Expressed by the venom gland.

It is found in the secreted. Functionally, vertebrate-selective toxin that causes pain by targeting voltage-gated sodium channels. The protein is Myrmicitoxin(1)-Pr2c of Pogonomyrmex rugosus (Desert harvester ant).